The chain runs to 432 residues: MFSKLSTRGIATRIGYLAQKAASQETAAPAAGSLSETVFARENKYGAHNYHPLPVALSKGEGVFVWDVEGKRYFDYLSAYSAVNQGHCHPKIVKALTEQASKLALTSRAFYSDVLGEYEEYVTKLFGFDKVLPMNTGVEGGETACKLARKWGYLQKKIPENQAKIIFARNNFWGRTLSAVSASNDPSSYEGFGPFMPGFELIEYDNVTALEEALKDPNVCAFMVEPIQGERGVVVPSDGYLKKVRELCSKNNVLWIADEVQTGLARTGKLLAVNYEDVQPDILILGKALSGGLYPVSAVLCNDPVMLCIKPGEHGSTYGGNPLGCRVAMAALEVLQEEKLAENAFKMGELLRSELSTLPKDVVSVVRGKGLLNAIVINEKYDAWKVCLKLKENGLLAKPTHGDIIRFAPPLVIMNPRLRESIEIIKKTILSM.

N6-(pyridoxal phosphate)lysine is present on Lys-287.

Belongs to the class-III pyridoxal-phosphate-dependent aminotransferase family. As to quaternary structure, homotetramer. The cofactor is pyridoxal 5'-phosphate.

The protein localises to the mitochondrion matrix. The catalysed reaction is a 2-oxocarboxylate + L-ornithine = L-glutamate 5-semialdehyde + an L-alpha-amino acid. It participates in amino-acid biosynthesis; L-proline biosynthesis; L-glutamate 5-semialdehyde from L-ornithine: step 1/1. The polypeptide is Ornithine aminotransferase, mitochondrial (Oat) (Drosophila ananassae (Fruit fly)).